We begin with the raw amino-acid sequence, 255 residues long: Pyrroloquinoline-quinone synthase (255 aa).

It belongs to the PqqC family.

The catalysed reaction is 6-(2-amino-2-carboxyethyl)-7,8-dioxo-1,2,3,4,7,8-hexahydroquinoline-2,4-dicarboxylate + 3 O2 = pyrroloquinoline quinone + 2 H2O2 + 2 H2O + H(+). It participates in cofactor biosynthesis; pyrroloquinoline quinone biosynthesis. In terms of biological role, ring cyclization and eight-electron oxidation of 3a-(2-amino-2-carboxyethyl)-4,5-dioxo-4,5,6,7,8,9-hexahydroquinoline-7,9-dicarboxylic-acid to PQQ. The polypeptide is Pyrroloquinoline-quinone synthase (Acinetobacter baylyi (strain ATCC 33305 / BD413 / ADP1)).